Reading from the N-terminus, the 555-residue chain is CTP synthase (555 aa).

An amidoligase domain region spans residues 1 to 270 (MTKFVFVTGG…DGLICDKLRL (270 aa)). Ser13 serves as a coordination point for CTP. Ser13 is a binding site for UTP. ATP contacts are provided by residues 14 to 19 (SLGKGI) and Asp71. 2 residues coordinate Mg(2+): Asp71 and Glu144. Residues 151-153 (DIE), 191-196 (KTKPTQ), and Lys227 each bind CTP. UTP contacts are provided by residues 191 to 196 (KTKPTQ) and Lys227. In terms of domain architecture, Glutamine amidotransferase type-1 spans 295–547 (NIVMVGKYVE…IKAALDHQAA (253 aa)). Gly356 is a binding site for L-glutamine. Cys383 acts as the Nucleophile; for glutamine hydrolysis in catalysis. L-glutamine-binding positions include 384 to 387 (LGMQ), Glu407, and Arg473. Residues His520 and Glu522 contribute to the active site.

It belongs to the CTP synthase family. As to quaternary structure, homotetramer.

It carries out the reaction UTP + L-glutamine + ATP + H2O = CTP + L-glutamate + ADP + phosphate + 2 H(+). It catalyses the reaction L-glutamine + H2O = L-glutamate + NH4(+). The enzyme catalyses UTP + NH4(+) + ATP = CTP + ADP + phosphate + 2 H(+). It functions in the pathway pyrimidine metabolism; CTP biosynthesis via de novo pathway; CTP from UDP: step 2/2. With respect to regulation, allosterically activated by GTP, when glutamine is the substrate; GTP has no effect on the reaction when ammonia is the substrate. The allosteric effector GTP functions by stabilizing the protein conformation that binds the tetrahedral intermediate(s) formed during glutamine hydrolysis. Inhibited by the product CTP, via allosteric rather than competitive inhibition. Catalyzes the ATP-dependent amination of UTP to CTP with either L-glutamine or ammonia as the source of nitrogen. Regulates intracellular CTP levels through interactions with the four ribonucleotide triphosphates. This Albidiferax ferrireducens (strain ATCC BAA-621 / DSM 15236 / T118) (Rhodoferax ferrireducens) protein is CTP synthase.